We begin with the raw amino-acid sequence, 281 residues long: Energy-coupling factor transporter ATP-binding protein EcfA1 (281 aa).

The 240-residue stretch at Ile6–Asp245 folds into the ABC transporter domain. ATP is bound at residue Gly44–Ser51.

Belongs to the ABC transporter superfamily. Energy-coupling factor EcfA family. As to quaternary structure, forms a stable energy-coupling factor (ECF) transporter complex composed of 2 membrane-embedded substrate-binding proteins (S component), 2 ATP-binding proteins (A component) and 2 transmembrane proteins (T component).

It localises to the cell membrane. Functionally, ATP-binding (A) component of a common energy-coupling factor (ECF) ABC-transporter complex. Unlike classic ABC transporters this ECF transporter provides the energy necessary to transport a number of different substrates. This chain is Energy-coupling factor transporter ATP-binding protein EcfA1, found in Clostridium perfringens (strain ATCC 13124 / DSM 756 / JCM 1290 / NCIMB 6125 / NCTC 8237 / Type A).